A 38-amino-acid polypeptide reads, in one-letter code: Large ribosomal subunit protein bL36A (38 aa).

The protein belongs to the bacterial ribosomal protein bL36 family.

The sequence is that of Large ribosomal subunit protein bL36A from Prochlorococcus marinus (strain MIT 9515).